Reading from the N-terminus, the 318-residue chain is Nucleotide-binding protein Jann_0539 (318 aa).

Residue 17-24 (GPSGAGRS) participates in ATP binding. A GTP-binding site is contributed by 64–67 (DPRT). The disordered stretch occupies residues 278–318 (GWQVSKRHRDVDKDASENSDRDRGASARTAASTDDGEAEQP). Over residues 286–302 (RDVDKDASENSDRDRGA) the composition is skewed to basic and acidic residues.

It belongs to the RapZ-like family.

Its function is as follows. Displays ATPase and GTPase activities. This is Nucleotide-binding protein Jann_0539 from Jannaschia sp. (strain CCS1).